The primary structure comprises 1283 residues: uncharacterized protein (1283 aa).

Residues 10 to 46 (ACPPNTFTCADGSCIPSDWKGDGEKDCEDGSDEEAVT) form the LDL-receptor class A domain. 2 cysteine pairs are disulfide-bonded: Cys11/Cys23 and Cys18/Cys36. The tract at residues 27–47 (DWKGDGEKDCEDGSDEEAVTG) is disordered. Over residues 34-45 (KDCEDGSDEEAV) the composition is skewed to acidic residues. N-linked (GlcNAc...) asparagine glycosylation is present at Asn79. The disordered stretch occupies residues 236–278 (STTLIVDETTESTSASAEDDDDDVLTTNTSEESTATTAHDEEV). The span at 261 to 272 (TTNTSEESTATT) shows a compositional bias: low complexity. Positions 332–389 (YQKTLEKEKCAIRNATSKCEALISYNNNLDCAIVTMNDECEVDAQNLVVELQEEVNDL) form a coiled coil. 2 disordered regions span residues 621–651 (ARPTPVTMPPRAPTAKPLPIPSAPTPPVASS) and 1005–1046 (SSST…PTDG). Pro residues predominate over residues 626 to 647 (VTMPPRAPTAKPLPIPSAPTPP). A compositionally biased stretch (low complexity) spans 1005-1015 (SSSTMVSTSSE). Over residues 1016 to 1026 (SDSESAPEQET) the composition is skewed to acidic residues. Positions 1027 to 1044 (EPTVPSTTETTESPSTPT) are enriched in low complexity. The helical transmembrane segment at 1263–1283 (VQSSVSFHIILAALIPFFALF) threads the bilayer.

Its subcellular location is the membrane. This is an uncharacterized protein from Caenorhabditis elegans.